A 342-amino-acid chain; its full sequence is Ketol-acid reductoisomerase (NADP(+)) (342 aa).

One can recognise a KARI N-terminal Rossmann domain in the interval 2 to 181 (VKVYYNGDIK…GGARAGVLET (180 aa)). NADP(+)-binding positions include 25–28 (YGSQ), Arg48, Ser52, and 82–85 (DEQQ). His107 is an active-site residue. NADP(+) is bound at residue Gly133. In terms of domain architecture, KARI C-terminal knotted spans 182 to 327 (TFKEETETDL…RKLREMMPFV (146 aa)). 4 residues coordinate Mg(2+): Asp190, Glu194, Glu226, and Glu230. Ser251 provides a ligand contact to substrate.

It belongs to the ketol-acid reductoisomerase family. Requires Mg(2+) as cofactor.

The enzyme catalyses (2R)-2,3-dihydroxy-3-methylbutanoate + NADP(+) = (2S)-2-acetolactate + NADPH + H(+). It carries out the reaction (2R,3R)-2,3-dihydroxy-3-methylpentanoate + NADP(+) = (S)-2-ethyl-2-hydroxy-3-oxobutanoate + NADPH + H(+). The protein operates within amino-acid biosynthesis; L-isoleucine biosynthesis; L-isoleucine from 2-oxobutanoate: step 2/4. It participates in amino-acid biosynthesis; L-valine biosynthesis; L-valine from pyruvate: step 2/4. Its function is as follows. Involved in the biosynthesis of branched-chain amino acids (BCAA). Catalyzes an alkyl-migration followed by a ketol-acid reduction of (S)-2-acetolactate (S2AL) to yield (R)-2,3-dihydroxy-isovalerate. In the isomerase reaction, S2AL is rearranged via a Mg-dependent methyl migration to produce 3-hydroxy-3-methyl-2-ketobutyrate (HMKB). In the reductase reaction, this 2-ketoacid undergoes a metal-dependent reduction by NADPH to yield (R)-2,3-dihydroxy-isovalerate. The protein is Ketol-acid reductoisomerase (NADP(+)) of Bacillus subtilis (strain 168).